Consider the following 337-residue polypeptide: Methionyl-tRNA formyltransferase (337 aa).

110-113 (SLLP) contributes to the (6S)-5,6,7,8-tetrahydrofolate binding site.

It belongs to the Fmt family.

It carries out the reaction L-methionyl-tRNA(fMet) + (6R)-10-formyltetrahydrofolate = N-formyl-L-methionyl-tRNA(fMet) + (6S)-5,6,7,8-tetrahydrofolate + H(+). In terms of biological role, attaches a formyl group to the free amino group of methionyl-tRNA(fMet). The formyl group appears to play a dual role in the initiator identity of N-formylmethionyl-tRNA by promoting its recognition by IF2 and preventing the misappropriation of this tRNA by the elongation apparatus. The protein is Methionyl-tRNA formyltransferase of Frankia casuarinae (strain DSM 45818 / CECT 9043 / HFP020203 / CcI3).